A 276-amino-acid polypeptide reads, in one-letter code: MKILRGEEIAEKKAENLHGIIERSGLEPSLKLIQIGDNEAASIYARAKIRRGKKIGIAVDLEKYDDISMKDLLKRIDDLAKDPQINGIMIENPLPKGFDYYEIVRNIPYYKDVDALSPYNQGLIALNREFLVPATPRAVIDIMDYYGYHENTVTIVNRSPVVGRPLSMMLLNRNYTVSVCHSKTKDIGSMTRSSKIVVVAVGRPGFLNREMVTPGSVVIDVGINYVNDKVVGDANFEDLSEYVEAITPVPGGVGPITATNILENVVKAAEFQKNNL.

Residues 157–159, Ser182, and Ile223 contribute to the NADP(+) site; that span reads NRS.

Belongs to the tetrahydrofolate dehydrogenase/cyclohydrolase family. In terms of assembly, homodimer.

It catalyses the reaction (6R)-5,10-methylene-5,6,7,8-tetrahydrofolate + NADP(+) = (6R)-5,10-methenyltetrahydrofolate + NADPH. The enzyme catalyses (6R)-5,10-methenyltetrahydrofolate + H2O = (6R)-10-formyltetrahydrofolate + H(+). It functions in the pathway one-carbon metabolism; tetrahydrofolate interconversion. In terms of biological role, catalyzes the oxidation of 5,10-methylenetetrahydrofolate to 5,10-methenyltetrahydrofolate and then the hydrolysis of 5,10-methenyltetrahydrofolate to 10-formyltetrahydrofolate. This Thermoplasma acidophilum (strain ATCC 25905 / DSM 1728 / JCM 9062 / NBRC 15155 / AMRC-C165) protein is Bifunctional protein FolD.